The sequence spans 161 residues: Crossover junction endodeoxyribonuclease RuvC (161 aa).

Active-site residues include aspartate 8, glutamate 67, and aspartate 139. The Mg(2+) site is built by aspartate 8, glutamate 67, and aspartate 139.

Belongs to the RuvC family. As to quaternary structure, homodimer which binds Holliday junction (HJ) DNA. The HJ becomes 2-fold symmetrical on binding to RuvC with unstacked arms; it has a different conformation from HJ DNA in complex with RuvA. In the full resolvosome a probable DNA-RuvA(4)-RuvB(12)-RuvC(2) complex forms which resolves the HJ. Mg(2+) is required as a cofactor.

The protein localises to the cytoplasm. It catalyses the reaction Endonucleolytic cleavage at a junction such as a reciprocal single-stranded crossover between two homologous DNA duplexes (Holliday junction).. Its function is as follows. The RuvA-RuvB-RuvC complex processes Holliday junction (HJ) DNA during genetic recombination and DNA repair. Endonuclease that resolves HJ intermediates. Cleaves cruciform DNA by making single-stranded nicks across the HJ at symmetrical positions within the homologous arms, yielding a 5'-phosphate and a 3'-hydroxyl group; requires a central core of homology in the junction. The consensus cleavage sequence is 5'-(A/T)TT(C/G)-3'. Cleavage occurs on the 3'-side of the TT dinucleotide at the point of strand exchange. HJ branch migration catalyzed by RuvA-RuvB allows RuvC to scan DNA until it finds its consensus sequence, where it cleaves and resolves the cruciform DNA. The protein is Crossover junction endodeoxyribonuclease RuvC of Wigglesworthia glossinidia brevipalpis.